The sequence spans 331 residues: MKQTVYTASPESQQIHVWSLNHDGSLKLVQVVDVPGQVQPMVVSPDKRYLYVGVRPEFRVLAYRIAPDDGALTFAAESALPGSPTHISTDHQGRFVFVGSYNAGNVSVTRLDDGLPAGVVDVVEGLEGCHSANISPDNRTLWVPALKQDRICLFTLSDDGKLVAQEPAEVTTVEGAGPRHMAFHPNQQYAYCVNELNSSVDVWELKDPHGNIECVQTLDMMPADFSDTRWAADIHITPDGRHLYACDRTASLITVFSVSEDGSVLTKEGFQPTETQPRGFNVDHSGKYLIAAGQKSHHIAVYAIAGEQGLLTEKGRYAVGQGPMWVVVNAY.

Belongs to the cycloisomerase 2 family.

It carries out the reaction 6-phospho-D-glucono-1,5-lactone + H2O = 6-phospho-D-gluconate + H(+). The protein operates within carbohydrate degradation; pentose phosphate pathway; D-ribulose 5-phosphate from D-glucose 6-phosphate (oxidative stage): step 2/3. Functionally, catalyzes the hydrolysis of 6-phosphogluconolactone to 6-phosphogluconate. The protein is 6-phosphogluconolactonase of Citrobacter koseri (strain ATCC BAA-895 / CDC 4225-83 / SGSC4696).